Here is a 496-residue protein sequence, read N- to C-terminus: L-arabinose isomerase (496 aa).

The Mn(2+) site is built by Glu302, Glu329, His346, and His445.

This sequence belongs to the arabinose isomerase family. Mn(2+) is required as a cofactor.

The enzyme catalyses beta-L-arabinopyranose = L-ribulose. Its pathway is carbohydrate degradation; L-arabinose degradation via L-ribulose; D-xylulose 5-phosphate from L-arabinose (bacterial route): step 1/3. Its function is as follows. Catalyzes the conversion of L-arabinose to L-ribulose. This is L-arabinose isomerase from Thermotoga maritima (strain ATCC 43589 / DSM 3109 / JCM 10099 / NBRC 100826 / MSB8).